We begin with the raw amino-acid sequence, 29 residues long: Trypsin inhibitor 4 (29 aa).

3 disulfides stabilise this stretch: Cys-3–Cys-20, Cys-10–Cys-22, and Cys-16–Cys-28.

Belongs to the protease inhibitor I7 (squash-type serine protease inhibitor) family.

The protein resides in the secreted. Strongly inhibits trypsin, weakly inhibits chymotrypsin. The polypeptide is Trypsin inhibitor 4 (Cyclanthera pedata (Achocha)).